Reading from the N-terminus, the 545-residue chain is Glucose-6-phosphate isomerase (545 aa).

The active-site Proton donor is the Glu-351. Residues His-382 and Lys-510 contribute to the active site.

Belongs to the GPI family.

It is found in the cytoplasm. It catalyses the reaction alpha-D-glucose 6-phosphate = beta-D-fructose 6-phosphate. It participates in carbohydrate biosynthesis; gluconeogenesis. The protein operates within carbohydrate degradation; glycolysis; D-glyceraldehyde 3-phosphate and glycerone phosphate from D-glucose: step 2/4. In terms of biological role, catalyzes the reversible isomerization of glucose-6-phosphate to fructose-6-phosphate. The protein is Glucose-6-phosphate isomerase of Shewanella baltica (strain OS155 / ATCC BAA-1091).